Consider the following 426-residue polypeptide: Zinc finger CCCH domain-containing protein 13 (426 aa).

The C3H1-type zinc-finger motif lies at 10–36 (AYKTKLCALWQRGNCNRDTCSFAHGHG). 3 disordered regions span residues 34-155 (GHGD…HEKQ), 253-317 (NEEG…DKTS), and 390-426 (NDAD…VDVE). Composition is skewed to basic and acidic residues over residues 54-70 (RRDY…DRRF), 78-101 (PGRE…RDSS), and 108-120 (RKSE…KTDD). A compositionally biased stretch (low complexity) spans 124–133 (NSSRSLSLSD). Basic and acidic residues predominate over residues 135 to 155 (NDEKKKDKFSSGDEKEDHEKQ). Residues 144 to 245 (SSGDEKEDHE…FERLGDLLAS (102 aa)) are a coiled coil. Over residues 255–272 (EGSSVNEDLNERSPNTAA) the composition is skewed to polar residues. The segment covering 284–317 (EEAKAVKKRRERDSDTMTRSDKYRSDVTDFDKTS) has biased composition (basic and acidic residues). Acidic residues predominate over residues 416–426 (YEGDDEEVDVE).

The polypeptide is Zinc finger CCCH domain-containing protein 13 (Oryza sativa subsp. japonica (Rice)).